A 608-amino-acid chain; its full sequence is Protein FAM151A (608 aa).

A helical transmembrane segment spans residues 14 to 34; sequence WILAGSVSMTLVLAISMILGL. The segment at 588-608 is disordered; sequence RHRPSSRTGPSYVEGFPGESR.

Belongs to the menorin family.

The protein resides in the membrane. The sequence is that of Protein FAM151A (Fam151a) from Rattus norvegicus (Rat).